A 361-amino-acid chain; its full sequence is 3-dehydroquinate synthase (361 aa).

NAD(+) contacts are provided by residues 60-65 (DAEAAK), 94-98 (GATTD), 118-119 (TT), Lys-131, and Lys-140. Zn(2+) contacts are provided by Glu-173, His-242, and His-258.

This sequence belongs to the sugar phosphate cyclases superfamily. Dehydroquinate synthase family. It depends on Co(2+) as a cofactor. Requires Zn(2+) as cofactor. NAD(+) is required as a cofactor.

It localises to the cytoplasm. The enzyme catalyses 7-phospho-2-dehydro-3-deoxy-D-arabino-heptonate = 3-dehydroquinate + phosphate. It functions in the pathway metabolic intermediate biosynthesis; chorismate biosynthesis; chorismate from D-erythrose 4-phosphate and phosphoenolpyruvate: step 2/7. In terms of biological role, catalyzes the conversion of 3-deoxy-D-arabino-heptulosonate 7-phosphate (DAHP) to dehydroquinate (DHQ). This is 3-dehydroquinate synthase from Cutibacterium acnes (strain DSM 16379 / KPA171202) (Propionibacterium acnes).